The chain runs to 329 residues: Ferredoxin--NAD(P)(+) reductase CarAd (329 aa).

The 91-residue stretch at 2–92 (YQLKIEGQAP…DLRIKVAVQD (91 aa)) folds into the 2Fe-2S ferredoxin-type domain. [2Fe-2S] cluster contacts are provided by Cys-35, Cys-40, Cys-43, and Cys-76. The 101-residue stretch at 100-200 (ISRMEAEVVE…TGPMGTSFFR (101 aa)) folds into the FAD-binding FR-type domain.

Monomer. Carbazole 1,9a-dioxygenase complex consists of a terminal oxygenase component CarAa, a ferredoxin reductase component CarAd and a ferredoxin component CarAc. The cofactor is [2Fe-2S] cluster. FAD is required as a cofactor.

The catalysed reaction is 2 reduced [2Fe-2S]-[ferredoxin] + NAD(+) + H(+) = 2 oxidized [2Fe-2S]-[ferredoxin] + NADH. It carries out the reaction 2 reduced [2Fe-2S]-[ferredoxin] + NADP(+) + H(+) = 2 oxidized [2Fe-2S]-[ferredoxin] + NADPH. Functionally, part of the multicomponent carbazole 1,9a-dioxygenase (CARDO), that converts carbazole (CAR) into 2-aminobiphenyl-2,3-diol. It can use both NAD and NADP as electron donors, but NAD is supposed to be the physiological electron donor. In Metapseudomonas resinovorans (Pseudomonas resinovorans), this protein is Ferredoxin--NAD(P)(+) reductase CarAd (carAd).